The following is a 7603-amino-acid chain: Cysteine repeat modular protein B (7603 aa).

Residue N172 is glycosylated (N-linked (GlcNAc...) asparagine). The helical transmembrane segment at 223–243 threads the bilayer; sequence LVGFFLVPVFVVFFVLSSDAT. 2 disordered regions span residues 248–275 and 291–323; these read GVGVLSARADREEKSSVSSSSRASSSPG and RDTKAAGYTGRSSRRSARARRRRAADGGEGKGF. Over residues 263-275 the composition is skewed to low complexity; the sequence is SVSSSSRASSSPG. Over residues 302–313 the composition is skewed to basic residues; that stretch reads SSRRSARARRRR. N329, N589, N848, N1128, N1183, and N1402 each carry an N-linked (GlcNAc...) asparagine glycan. The interval 1554–1574 is disordered; that stretch reads VLRSRSGPSHPSSVSQPSPSF. The span at 1557-1573 shows a compositional bias: low complexity; it reads SRSGPSHPSSVSQPSPS. N1622, N2578, N2664, N3094, and N3126 each carry an N-linked (GlcNAc...) asparagine glycan. Residues 3316–3445 form a disordered region; it reads SNAVPEADEN…SDLTTSQPED (130 aa). The span at 3321–3340 shows a compositional bias: acidic residues; sequence EADENQVESAEPEQNAEGET. The segment covering 3342–3360 has biased composition (low complexity); it reads EQGAEEAGGNAAEPGAESG. N-linked (GlcNAc...) asparagine glycosylation is found at N3546, N4367, N4823, N4901, N5186, N5546, and N5666. A disordered region spans residues 5758 to 5799; the sequence is LAESRSDDGTVGDDVDLDDNALSGTTNSGWTTSSSNSERVRK. Positions 5767–5776 are enriched in acidic residues; the sequence is TVGDDVDLDD. Low complexity predominate over residues 5780-5794; it reads SGTTNSGWTTSSSNS. Residues N5806, N5876, N5998, N6055, and N6369 are each glycosylated (N-linked (GlcNAc...) asparagine). Positions 6043–6115 are disordered; the sequence is GEADHTPADG…EASEAESVSA (73 aa). The segment covering 6051 to 6060 has biased composition (polar residues); sequence DGSSNSSEDS. Positions 6391 to 6405 are enriched in basic and acidic residues; that stretch reads EFTDTGPAPDDHTDE. Residues 6391–6436 are disordered; the sequence is EFTDTGPAPDDHTDEGGANLDSTGGSGEPSSSAPVDPSGENEGQLL. Residues 6410–6423 show a composition bias toward polar residues; the sequence is LDSTGGSGEPSSSA. An N-linked (GlcNAc...) asparagine glycan is attached at N6453. 8 helical membrane passes run 6520-6540, 6552-6572, 6578-6598, 6627-6647, 6770-6790, 6831-6851, 6888-6908, and 6912-6932; these read IFILMRLVVCGIIWIITALTI, VLIRIVMSHMFFLSVYGLMPA, LAGWASIYRLFFFEFYFALHP, IFVPFIDAVLLTIIGAICVAT, LILGGVGLLVWGVGSIAGFVA, CVALIITMYVHANASGAQEIF, GLMVNIIIGVIFQGSYYFEVF, and GAIPLAVAIFYYLYVLWSLFV. N7013 carries N-linked (GlcNAc...) asparagine glycosylation. A helical transmembrane segment spans residues 7017-7037; the sequence is FVAALSDSLSQLVIAWCQFTI. N7061 carries N-linked (GlcNAc...) asparagine glycosylation. Residues 7174 to 7242 are a coiled coil; the sequence is APQLRKENHA…RGLIESEIDD (69 aa). The interval 7379–7603 is disordered; sequence AAPAAGLRSH…LKKPGSPKQE (225 aa). Polar residues predominate over residues 7408–7417; that stretch reads LGTNLSTPSA. N7411 carries N-linked (GlcNAc...) asparagine glycosylation. Low complexity-rich tracts occupy residues 7474–7496, 7509–7541, and 7560–7582; these read PTPSRSPSGTTRTVGSVVRSVTP, SEAPLISPSASSLASPRSLSPLTERRGSQSSDL, and GEAAPAEAPSPSPRSSSPLAAQP.

In terms of assembly, component of a complex, at least composed of cysteine repeat modular protein A (CRMPa), cysteine repeat modular protein B (CRMPb), micronemal protein 15 (MIC15) and thrombospondin type 1 domain-containing protein (TSP1).

The protein resides in the cell membrane. It localises to the endoplasmic reticulum. Its subcellular location is the golgi apparatus. In terms of biological role, required for triggering rhoptry secretion. Plays a role in host cell invasion. The chain is Cysteine repeat modular protein B from Toxoplasma gondii.